A 1816-amino-acid chain; its full sequence is Kinesin-like protein KIF1B (1816 aa).

Ser2 carries the post-translational modification N-acetylserine. A Kinesin motor domain is found at 5–354; the sequence is SVKVAVRVRP…LRYADRAKQI (350 aa). 97–104 lines the ATP pocket; it reads GQTGAGKS. An interaction with KIFBP region spans residues 270–350; it reads NINKSLTTLG…TLSTLRYADR (81 aa). A coiled-coil region spans residues 365–386; the sequence is NAKLVRELKEEVTRLKDLLRAQ. Residues 431-450 form a disordered region; it reads FSTASMGSLTSSPSSCSLSS. Low complexity predominate over residues 432–450; it reads STASMGSLTSSPSSCSLSS. The stretch at 470–502 forms a coiled coil; it reads GEEAIERLKESEKIIAELNETWEEKLRKTEAIR. The FHA domain maps to 556-612; sequence TRVGQADAERRQDIVLSGAHIKEEHCIFRSERSNSGEVIVTLEPCERSETYVNGKRV. Thr647 and Thr652 each carry phosphothreonine. Residues Gln663 and Glu665 each carry the phosphoserine modification. Coiled-coil stretches lie at residues 668 to 737 and 841 to 869; these read EKQG…EEEV and SLEK…AQDE. 2 positions are modified to phosphoserine: Ser1054 and Ser1057. Position 1075 is a phosphothreonine (Thr1075). 4 positions are modified to phosphoserine: Asn1141, Ser1416, Ser1454, and Ser1487. Residues 1550–1570 form a disordered region; the sequence is STTTFESAITPSESSGYDSGD. Polar residues predominate over residues 1554-1566; it reads FESAITPSESSGY. 4 positions are modified to phosphoserine: Ser1573, Ser1603, Ser1610, and Ser1613. Residues 1617 to 1660 are disordered; sequence RDPSESSFSSATLTPSSTCPSLVDSRSNSLDQKTPEANSRASSP. The segment covering 1621 to 1634 has biased composition (low complexity); that stretch reads ESSFSSATLTPSST. The span at 1640-1658 shows a compositional bias: polar residues; the sequence is DSRSNSLDQKTPEANSRAS. Positions 1702 to 1799 constitute a PH domain; it reads VSKKGYLHFK…WLYAFNPLLA (98 aa).

The protein belongs to the TRAFAC class myosin-kinesin ATPase superfamily. Kinesin family. Unc-104 subfamily. In terms of assembly, monomer. Interacts with KIFBP; positively regulates KIF1B microtubule motor activity. Interacts (via C-terminus end of the kinesin-motor domain) with CHP1; the interaction occurs in a calcium-dependent manner. Interacts with MADD (via death domain); links this isoform to Rab3-carrying vesicles in anterograde synaptic vesicle transport. As to expression, isoform 3 is abundant in the skeletal muscle. It is also expressed in fetal brain, lung and kidney, and adult heart, placenta, testis, ovary and small intestine. Isoform 2 is abundant in the brain and also expressed in fetal heart, lung, liver and kidney, and adult skeletal muscle, placenta, liver, kidney, heart, spleen, thymus, prostate, testis, ovary, small intestine, colon and pancreas.

The protein resides in the cytoplasm. Its subcellular location is the cytoskeleton. The protein localises to the cytoplasmic vesicle. It is found in the secretory vesicle. It localises to the synaptic vesicle membrane. The protein resides in the mitochondrion. It catalyses the reaction ATP + H2O + a kinesin associated with a microtubule at position (n) = ADP + phosphate a kinesin associated with a microtubule at position (n+1, toward the plus end).. Its function is as follows. Has a plus-end-directed microtubule motor activity and functions as a motor for transport of vesicles and organelles along microtubules. Functionally, has a plus-end-directed microtubule motor activity and functions as a motor for anterograde synaptic vesicle transport along axonal microtubules from the cell body to the presynapse in neuronal cells. Functions as a downstream effector in a developmental apoptotic pathway that is activated when nerve growth factor (NGF) becomes limiting for neuronal progenitor cells. In terms of biological role, has a plus-end-directed microtubule motor activity and functions as a motor for anterograde transport of mitochondria. This is Kinesin-like protein KIF1B from Homo sapiens (Human).